We begin with the raw amino-acid sequence, 120 residues long: uncharacterized protein (120 aa).

A helical membrane pass occupies residues 47–63 (VSIVIGLCTVLISAGAG).

The protein resides in the membrane. This is an uncharacterized protein from Sinorhizobium fredii (strain NBRC 101917 / NGR234).